A 78-amino-acid chain; its full sequence is Large ribosomal subunit protein bL28 (78 aa).

Positions 1-21 are disordered; the sequence is MSRVCQVTGKRPVSGNNRSHA.

Belongs to the bacterial ribosomal protein bL28 family.

This chain is Large ribosomal subunit protein bL28, found in Serratia proteamaculans (strain 568).